A 309-amino-acid polypeptide reads, in one-letter code: Porphobilinogen deaminase (309 aa).

At Cys-242 the chain carries S-(dipyrrolylmethanemethyl)cysteine.

The protein belongs to the HMBS family. In terms of assembly, monomer. The cofactor is dipyrromethane.

The enzyme catalyses 4 porphobilinogen + H2O = hydroxymethylbilane + 4 NH4(+). The protein operates within porphyrin-containing compound metabolism; protoporphyrin-IX biosynthesis; coproporphyrinogen-III from 5-aminolevulinate: step 2/4. Tetrapolymerization of the monopyrrole PBG into the hydroxymethylbilane pre-uroporphyrinogen in several discrete steps. The sequence is that of Porphobilinogen deaminase from Shewanella frigidimarina (strain NCIMB 400).